We begin with the raw amino-acid sequence, 88 residues long: Putative transmembrane protein ORF24 (88 aa).

3 helical membrane-spanning segments follow: residues 16-36 (LNMG…WAGM), 42-62 (AVFV…VTQF), and 64-84 (FIWF…VASI).

The protein localises to the host membrane. This is Putative transmembrane protein ORF24 from Haloarcula hispanica (His1V).